The primary structure comprises 114 residues: Large ribosomal subunit protein uL22c (114 aa).

This sequence belongs to the universal ribosomal protein uL22 family. As to quaternary structure, part of the 50S ribosomal subunit.

The protein resides in the plastid. It localises to the chloroplast. Functionally, this protein binds specifically to 23S rRNA. Its function is as follows. The globular domain of the protein is located near the polypeptide exit tunnel on the outside of the subunit, while an extended beta-hairpin is found that lines the wall of the exit tunnel in the center of the 70S ribosome. This is Large ribosomal subunit protein uL22c (rpl22) from Gracilaria tenuistipitata var. liui (Red alga).